We begin with the raw amino-acid sequence, 347 residues long: UPF0284 protein M1425_0030 (347 aa).

This sequence belongs to the UPF0284 family.

The polypeptide is UPF0284 protein M1425_0030 (Saccharolobus islandicus (strain M.14.25 / Kamchatka #1) (Sulfolobus islandicus)).